The chain runs to 120 residues: Crustacean hyperglycemic hormones 1 (120 aa).

Positions 1-24 are cleaved as a signal peptide; that stretch reads MIAFRAVWSALLASLLLLLLAPSA. 3 cysteine pairs are disulfide-bonded: C53/C89, C69/C85, and C72/C98. At V118 the chain carries Valine amide.

Belongs to the arthropod CHH/MIH/GIH/VIH hormone family. In terms of tissue distribution, produced by the medulla terminalis X-organ in the eyestalks and transported to the sinus gland where they are stored and released.

It is found in the secreted. Functionally, hormone found in the sinus gland of isopods and decapods which controls the blood sugar level. Has a secretagogue action over the amylase released from the midgut gland. May act as a stress hormone and may be involved in the control of molting and reproduction. This is Crustacean hyperglycemic hormones 1 from Penaeus japonicus (Kuruma prawn).